Consider the following 399-residue polypeptide: Chorismate synthase (399 aa).

Residues R40 and R46 each contribute to the NADP(+) site. FMN is bound by residues 135 to 137 (RAS), 256 to 257 (QA), G301, 316 to 320 (KPIAT), and R342.

The protein belongs to the chorismate synthase family. Homotetramer. The cofactor is FMNH2.

The catalysed reaction is 5-O-(1-carboxyvinyl)-3-phosphoshikimate = chorismate + phosphate. Its pathway is metabolic intermediate biosynthesis; chorismate biosynthesis; chorismate from D-erythrose 4-phosphate and phosphoenolpyruvate: step 7/7. Its function is as follows. Catalyzes the anti-1,4-elimination of the C-3 phosphate and the C-6 proR hydrogen from 5-enolpyruvylshikimate-3-phosphate (EPSP) to yield chorismate, which is the branch point compound that serves as the starting substrate for the three terminal pathways of aromatic amino acid biosynthesis. This reaction introduces a second double bond into the aromatic ring system. This is Chorismate synthase from Paenarthrobacter aurescens (strain TC1).